Reading from the N-terminus, the 183-residue chain is Histone deacetylase complex subunit SAP30L (183 aa).

Position 1 is an N-acetylmethionine (M1). Residues 1–10 (MNGFSTEEDS) show a composition bias toward acidic residues. The interval 1-23 (MNGFSTEEDSREGPPAAPAAAAP) is disordered. 2 disulfides stabilise this stretch: C29–C30 and C38–C74. The segment at 29–77 (CCLIEDGERCVRPAGNASFSKRVQKSISQKKLKLDIDKSVRHLYICDFH) adopts an Atypical zinc-finger fold. K49 participates in a covalent cross-link: Glycyl lysine isopeptide (Lys-Gly) (interchain with G-Cter in SUMO2). The tract at residues 85-105 (RNKRKRKTSDDGGDSPEHDTD) is disordered. The Nuclear localization signal (NLS) motif lies at 86-91 (NKRKRK). Residues 88–90 (RKR) are important for DNA and phosphoinositide binding. Position 92 is a phosphothreonine (T92). Phosphoserine is present on residues S93 and S99. Residue T104 is modified to Phosphothreonine. Glycyl lysine isopeptide (Lys-Gly) (interchain with G-Cter in SUMO2) cross-links involve residues K155, K166, and K175.

The protein belongs to the SAP30 family. In terms of assembly, interacts with components of the histone deacetylase complex SIN3A, HDAC1 and HDAC2. Binds histones and nucleosomes. Interacts with FEZ1. Detected in brain and ovary, and at lower levels in heart, small intestine, lung, kidney, skeletal muscle, stomach and spleen (at protein level). Ubiquitous; expressed in all tissues tested with highest levels in testis.

It localises to the nucleus. Its subcellular location is the nucleolus. Functions as a transcription repressor, probably via its interaction with histone deacetylase complexes. Involved in the functional recruitment of the class 1 Sin3-histone deacetylase complex (HDAC) to the nucleolus. Binds DNA, apparently without sequence-specificity, and bends bound double-stranded DNA. Binds phosphoinositol phosphates (phosphoinositol 3-phosphate, phosphoinositol 4-phosphate and phosphoinositol 5-phosphate) via the same basic sequence motif that mediates DNA binding and nuclear import. Its function is as follows. Functions as a transcription repressor; isoform 2 has lower transcription repressor activity than isoform 1 and isoform 3. In terms of biological role, functions as a transcription repressor; its activity is marginally lower than that of isoform 1. This is Histone deacetylase complex subunit SAP30L (SAP30L) from Homo sapiens (Human).